The following is a 578-amino-acid chain: Pentatricopeptide repeat-containing protein At4g22760 (578 aa).

PPR repeat units lie at residues Asp-68–Pro-102, Ser-103–Gly-137, Cys-138–Lys-168, Asn-169–Ser-203, Trp-204–Lys-230, Ser-231–Lys-261, Asn-262–Lys-292, Asp-293–Ile-327, Asp-330–Ile-364, Asp-365–Lys-395, Asp-396–Pro-430, Asn-431–Pro-465, and Ser-466–Gln-496. A type E motif region spans residues Val-501–Ser-576.

This sequence belongs to the PPR family. PCMP-E subfamily.

The sequence is that of Pentatricopeptide repeat-containing protein At4g22760 (PCMP-E6) from Arabidopsis thaliana (Mouse-ear cress).